A 485-amino-acid polypeptide reads, in one-letter code: Glutamyl-tRNA(Gln) amidotransferase subunit A (485 aa).

Catalysis depends on charge relay system residues lysine 79 and serine 154. The active-site Acyl-ester intermediate is serine 178.

Belongs to the amidase family. GatA subfamily. In terms of assembly, heterotrimer of A, B and C subunits.

It carries out the reaction L-glutamyl-tRNA(Gln) + L-glutamine + ATP + H2O = L-glutaminyl-tRNA(Gln) + L-glutamate + ADP + phosphate + H(+). Its function is as follows. Allows the formation of correctly charged Gln-tRNA(Gln) through the transamidation of misacylated Glu-tRNA(Gln) in organisms which lack glutaminyl-tRNA synthetase. The reaction takes place in the presence of glutamine and ATP through an activated gamma-phospho-Glu-tRNA(Gln). In Staphylococcus aureus (strain bovine RF122 / ET3-1), this protein is Glutamyl-tRNA(Gln) amidotransferase subunit A.